A 1107-amino-acid chain; its full sequence is uncharacterized protein (1107 aa).

A compositionally biased stretch (low complexity) spans serine 180–glycine 204. Disordered stretches follow at residues serine 180–asparagine 251 and leucine 501–methionine 530. Positions serine 205–asparagine 215 are enriched in gly residues. Polar residues predominate over residues proline 219–isoleucine 237. 2 stretches are compositionally biased toward low complexity: residues asparagine 238–asparagine 251 and leucine 501–aspartate 521. 2 coiled-coil regions span residues lysine 789–glutamate 816 and asparagine 940–lysine 1012.

This is an uncharacterized protein from Dictyostelium discoideum (Social amoeba).